Consider the following 174-residue polypeptide: Crossover junction endodeoxyribonuclease RuvC (174 aa).

Catalysis depends on residues D8, E68, and D140. Mg(2+) contacts are provided by D8, E68, and D140.

It belongs to the RuvC family. As to quaternary structure, homodimer which binds Holliday junction (HJ) DNA. The HJ becomes 2-fold symmetrical on binding to RuvC with unstacked arms; it has a different conformation from HJ DNA in complex with RuvA. In the full resolvosome a probable DNA-RuvA(4)-RuvB(12)-RuvC(2) complex forms which resolves the HJ. The cofactor is Mg(2+).

Its subcellular location is the cytoplasm. The enzyme catalyses Endonucleolytic cleavage at a junction such as a reciprocal single-stranded crossover between two homologous DNA duplexes (Holliday junction).. Functionally, the RuvA-RuvB-RuvC complex processes Holliday junction (HJ) DNA during genetic recombination and DNA repair. Endonuclease that resolves HJ intermediates. Cleaves cruciform DNA by making single-stranded nicks across the HJ at symmetrical positions within the homologous arms, yielding a 5'-phosphate and a 3'-hydroxyl group; requires a central core of homology in the junction. The consensus cleavage sequence is 5'-(A/T)TT(C/G)-3'. Cleavage occurs on the 3'-side of the TT dinucleotide at the point of strand exchange. HJ branch migration catalyzed by RuvA-RuvB allows RuvC to scan DNA until it finds its consensus sequence, where it cleaves and resolves the cruciform DNA. The polypeptide is Crossover junction endodeoxyribonuclease RuvC (Legionella pneumophila (strain Lens)).